The sequence spans 464 residues: Hydrogen cyanide synthase subunit HcnB (464 aa).

As to quaternary structure, heterotrimer of HcnA, HcnB and HcnC.

It localises to the cell membrane. It carries out the reaction glycine + 2 A = hydrogen cyanide + 2 AH2 + CO2. Oxygen is necessary for cyanogenesis. Activated by succinate, glycine methyl ester, glucose and D,L-methionine in addition to glycine. Phenazine methosulfate, methylene blue, 2,6-dichlorophenolindophenol (DCIP) and ferricyanide can replace oxygen for the reaction. Inhibited by pyrrolnitrin and acriflavine at 1 mM concentration. In terms of biological role, a three-component membrane-bound flavoenzyme that catalyzes the formation of hydrogen cyanide, a secondary metabolite, by transfer of electrons to a cyanide-resistant branch of the aerobic respiratory chain. This Pseudomonas aeruginosa (strain ATCC 15692 / DSM 22644 / CIP 104116 / JCM 14847 / LMG 12228 / 1C / PRS 101 / PAO1) protein is Hydrogen cyanide synthase subunit HcnB.